A 169-amino-acid chain; its full sequence is ALK and LTK ligand 2a (169 aa).

Positions 1 to 25 are cleaved as a signal peptide; it reads MRALRAPVLVMGLVLLICTAAQSDA. Residues 45–68 are disordered; it reads ENSADDESAQKTESAPEPKDTHHL. Residues 52–67 are compositionally biased toward basic and acidic residues; that stretch reads SAQKTESAPEPKDTHH. Disulfide bonds link C130–C166 and C144–C153.

It belongs to the ALKAL family. As to quaternary structure, homodimer. In terms of tissue distribution, expressed at high level in the notochord and iridophore stripes of the trunk, as well as in the eye and swim bladder.

The protein localises to the secreted. It localises to the cell membrane. In terms of biological role, cytokine that acts as a physiological ligand for receptor tyrosine kinases LTK and ALK. Required for neural crest cell differentiation and iridophore development during embryonic iridophore development and adult stripe development by acting as a receptor for LTK. This Danio rerio (Zebrafish) protein is ALK and LTK ligand 2a.